The chain runs to 32 residues: Turripeptide XIV-18 (32 aa).

Position 30 is an isoleucine amide (isoleucine 30).

Post-translationally, contains 2 disulfide bonds. As to expression, expressed by the venom duct.

The protein resides in the secreted. The sequence is that of Turripeptide XIV-18 from Gemmula speciosa (Splendid gem-turris).